The following is a 233-amino-acid chain: Small ribosomal subunit protein uS2 (233 aa).

This sequence belongs to the universal ribosomal protein uS2 family.

The sequence is that of Small ribosomal subunit protein uS2 from Bacillus anthracis.